The sequence spans 310 residues: Dermonecrotic toxin LiSicTox-alphaII2 (310 aa).

The signal sequence occupies residues 1–18 (MLLRIALILGCWSILSEG). Positions 19–26 (AENDIAER) are excised as a propeptide. His38 is an active-site residue. 2 residues coordinate Mg(2+): Glu58 and Asp60. His74 functions as the Nucleophile in the catalytic mechanism. 2 disulfide bridges follow: Cys78–Cys84 and Cys80–Cys224. An N-linked (GlcNAc...) asparagine glycan is attached at Asn99. Asp118 provides a ligand contact to Mg(2+).

This sequence belongs to the arthropod phospholipase D family. Class II subfamily. Mg(2+) serves as cofactor. As to expression, expressed by the venom gland.

The protein resides in the secreted. The catalysed reaction is an N-(acyl)-sphingosylphosphocholine = an N-(acyl)-sphingosyl-1,3-cyclic phosphate + choline. The enzyme catalyses an N-(acyl)-sphingosylphosphoethanolamine = an N-(acyl)-sphingosyl-1,3-cyclic phosphate + ethanolamine. It carries out the reaction a 1-acyl-sn-glycero-3-phosphocholine = a 1-acyl-sn-glycero-2,3-cyclic phosphate + choline. It catalyses the reaction a 1-acyl-sn-glycero-3-phosphoethanolamine = a 1-acyl-sn-glycero-2,3-cyclic phosphate + ethanolamine. In terms of biological role, dermonecrotic toxins cleave the phosphodiester linkage between the phosphate and headgroup of certain phospholipids (sphingolipid and lysolipid substrates), forming an alcohol (often choline) and a cyclic phosphate. This toxin acts on sphingomyelin (SM). It may also act on ceramide phosphoethanolamine (CPE), lysophosphatidylcholine (LPC) and lysophosphatidylethanolamine (LPE), but not on lysophosphatidylserine (LPS), and lysophosphatidylglycerol (LPG). It acts by transphosphatidylation, releasing exclusively cyclic phosphate products as second products. Induces dermonecrosis, hemolysis, increased vascular permeability, edema, inflammatory response, and platelet aggregation. The chain is Dermonecrotic toxin LiSicTox-alphaII2 from Loxosceles intermedia (Brown spider).